The primary structure comprises 826 residues: Lethal(3)malignant brain tumor-like protein 1 (826 aa).

Residue Ser-136 is modified to Phosphoserine. 2 disordered regions span residues 167–197 (LEPP…SGDR) and 220–271 (LLKP…RSQL). Over residues 242–256 (EAVKQGEGKDAEREP) the composition is skewed to basic and acidic residues. MBT repeat units lie at residues 280 to 380 (WSWE…LQLP), 388 to 487 (FSWS…LTPP), and 496 to 591 (FCWE…LEPP). Residues 453-460 (FDDWGDTY) form an interaction with monomethylated and dimethylated peptides region. Residues 586–621 (HPLEPPLRPRESSSVSPGGCPPLSHRSPPHTKTSKY) are disordered. Over residues 612 to 621 (SPPHTKTSKY) the composition is skewed to basic residues. The CCHHC-type zinc finger occupies 619–662 (SKYNFHHRKCPTPGCDGSGHVTGKFTAHHCLSGCPLAEKNQSRL). Cys-628, Cys-633, His-646, and Cys-652 together coordinate Zn(2+). Positions 663–699 (KAELSDSETAARKKNPSNLSPRKKPRHQGRIGRPPKY) are disordered. Positions 683 to 699 (PRKKPRHQGRIGRPPKY) are enriched in basic residues. Residues 757-821 (WTIEEVFGFV…YNAILMFKNT (65 aa)) enclose the SAM domain.

In terms of assembly, homodimer. Interacts with RB1/RB (when monomethylated at 'Lys-860'). Interacts with p53/TP53 (when monomethylated at 'Lys-382'). Interacts with CBX3, ETV6, KMT5A and VCP/p97. In terms of processing, ubiquitinated in a VCP/p97-dependent way following DNA damage, leading to its removal from DNA damage sites, promoting accessibility of H4K20me2 mark for DNA repair protein TP53BP1, which is then recruited to DNA damage sites. Highly expressed in brain, testis, eyes, and ES cells.

The protein resides in the nucleus. Functionally, polycomb group (PcG) protein that specifically recognizes and binds mono- and dimethyllysine residues on target proteins, thereby acting as a 'reader' of a network of post-translational modifications. PcG proteins maintain the transcriptionally repressive state of genes: acts as a chromatin compaction factor by recognizing and binding mono- and dimethylated histone H1b/H1-4 at 'Lys-26' (H1bK26me1 and H1bK26me2) and histone H4 at 'Lys-20' (H4K20me1 and H4K20me2), leading to condense chromatin and repress transcription. Recognizes and binds p53/TP53 monomethylated at 'Lys-382', leading to repress p53/TP53-target genes. Also recognizes and binds RB1/RB monomethylated at 'Lys-860'. Participates in the ETV6-mediated repression. Probably plays a role in cell proliferation. Overexpression induces multinucleated cells, suggesting that it is required to accomplish normal mitosis. This Mus musculus (Mouse) protein is Lethal(3)malignant brain tumor-like protein 1 (L3mbtl1).